Here is a 961-residue protein sequence, read N- to C-terminus: Glycine dehydrogenase (decarboxylating) (961 aa).

Residue K709 is modified to N6-(pyridoxal phosphate)lysine.

The protein belongs to the GcvP family. In terms of assembly, the glycine cleavage system is composed of four proteins: P, T, L and H. Pyridoxal 5'-phosphate serves as cofactor.

The enzyme catalyses N(6)-[(R)-lipoyl]-L-lysyl-[glycine-cleavage complex H protein] + glycine + H(+) = N(6)-[(R)-S(8)-aminomethyldihydrolipoyl]-L-lysyl-[glycine-cleavage complex H protein] + CO2. In terms of biological role, the glycine cleavage system catalyzes the degradation of glycine. The P protein binds the alpha-amino group of glycine through its pyridoxal phosphate cofactor; CO(2) is released and the remaining methylamine moiety is then transferred to the lipoamide cofactor of the H protein. This Streptomyces avermitilis (strain ATCC 31267 / DSM 46492 / JCM 5070 / NBRC 14893 / NCIMB 12804 / NRRL 8165 / MA-4680) protein is Glycine dehydrogenase (decarboxylating).